The chain runs to 32 residues: Ranatuerin-2BYa (32 aa).

Cys27 and Cys32 are disulfide-bonded.

Expressed by the skin glands.

It localises to the secreted. Antibacterial activity against Gram-positive bacterium S.aureus and Gram-negative bacterium E.coli. Weak hemolytic activity. The protein is Ranatuerin-2BYa of Rana boylii (Foothill yellow-legged frog).